A 328-amino-acid polypeptide reads, in one-letter code: Sialic acid-binding Ig-like lectin 15 (328 aa).

Residues 1–19 (MEKSIWLLACLAWVLPTGS) form the signal peptide. At 20–263 (FVRTKIDTTE…RFHGASGAST (244 aa)) the chain is on the extracellular side. One can recognise an Ig-like V-type domain in the interval 40–158 (PAQRWSMQVP…DVHDRYESRH (119 aa)). 2 disulfide bridges follow: Cys-64-Cys-142 and Cys-95-Cys-104. Residue Arg-143 participates in N-acetylneuraminate binding. The region spanning 168 to 251 (PRIVNISVLP…SLGRSEASVY (84 aa)) is the Ig-like C2-type domain. N-linked (GlcNAc...) asparagine glycosylation is present at Asn-172. Cys-187 and Cys-237 form a disulfide bridge. Residues 264–284 (VALLLGALGFKALLLLGVLAA) traverse the membrane as a helical segment. At 285–328 (RAARRRPEHLDTPDTPPRSQAQESNYENLSQMNPRSPPATMCSP) the chain is on the cytoplasmic side. The tract at residues 289–328 (RRPEHLDTPDTPPRSQAQESNYENLSQMNPRSPPATMCSP) is disordered. The span at 301 to 318 (PRSQAQESNYENLSQMNP) shows a compositional bias: polar residues.

Belongs to the immunoglobulin superfamily. SIGLEC (sialic acid binding Ig-like lectin) family. In terms of assembly, interacts with TYROBP and HCST. In terms of tissue distribution, expressed in macrophage and/or dendritic cells of spleen and lymph nodes.

It localises to the membrane. Functionally, binds sialylated glycoproteins. This chain is Sialic acid-binding Ig-like lectin 15 (SIGLEC15), found in Homo sapiens (Human).